The sequence spans 122 residues: Large ribosomal subunit protein uL14c (122 aa).

It belongs to the universal ribosomal protein uL14 family. As to quaternary structure, part of the 50S ribosomal subunit.

The protein resides in the plastid. It is found in the chloroplast. Functionally, binds to 23S rRNA. This Buxus microphylla (Littleleaf boxwood) protein is Large ribosomal subunit protein uL14c.